A 218-amino-acid polypeptide reads, in one-letter code: Ribose-5-phosphate isomerase A (218 aa).

Residues 28–31, 81–84, and 94–97 each bind substrate; these read TGST, DGAD, and KGGG. E103 acts as the Proton acceptor in catalysis. K121 lines the substrate pocket.

It belongs to the ribose 5-phosphate isomerase family. As to quaternary structure, homodimer.

The catalysed reaction is aldehydo-D-ribose 5-phosphate = D-ribulose 5-phosphate. Its pathway is carbohydrate degradation; pentose phosphate pathway; D-ribose 5-phosphate from D-ribulose 5-phosphate (non-oxidative stage): step 1/1. In terms of biological role, catalyzes the reversible conversion of ribose-5-phosphate to ribulose 5-phosphate. In Thioalkalivibrio sulfidiphilus (strain HL-EbGR7), this protein is Ribose-5-phosphate isomerase A.